Reading from the N-terminus, the 1137-residue chain is Eukaryotic translation initiation factor 3 subunit A (1137 aa).

The 183-residue stretch at 319 to 501 folds into the PCI domain; that stretch reads LQRMAAHVLL…NSIYFGTDLT (183 aa). 2 stretches are compositionally biased toward basic and acidic residues: residues 588–623 and 829–899; these read QNNA…EERE and AAEE…RGGD. 2 disordered regions span residues 588 to 631 and 829 to 1137; these read QNNA…QNEI and AAEE…VKRR. Position 908 is a phosphoserine (serine 908). 4 stretches are compositionally biased toward basic and acidic residues: residues 922-971, 985-1046, 1054-1083, and 1106-1127; these read RGIE…EPDS, SRDE…EPQR, DAPR…RGDQ, and AREE…KAAD.

It belongs to the eIF-3 subunit A family. In terms of assembly, component of the eukaryotic translation initiation factor 3 (eIF-3) complex. The eIF-3 complex interacts with pix.

It localises to the cytoplasm. RNA-binding component of the eukaryotic translation initiation factor 3 (eIF-3) complex, which is involved in protein synthesis of a specialized repertoire of mRNAs and, together with other initiation factors, stimulates binding of mRNA and methionyl-tRNAi to the 40S ribosome. The eIF-3 complex specifically targets and initiates translation of a subset of mRNAs involved in cell proliferation. This chain is Eukaryotic translation initiation factor 3 subunit A, found in Drosophila yakuba (Fruit fly).